The primary structure comprises 265 residues: Undecaprenyl-diphosphatase 1 (265 aa).

7 helical membrane passes run 4 to 24 (IITAFILGIVEGLAEFLPISS), 42 to 62 (AKTFEIVIQLGAILAIAILYH), 84 to 104 (FHVFLGVFPAVVAGLLLHDII), 108 to 128 (LFQPYTVVIGLVAGAILMIFA), 184 to 204 (SEFSFLIALPVMVGATGLDLL), 217 to 237 (MFAVGFITSFIVAMLAVVTFL), and 245 to 265 (LKPFAYYRILLAILFTVFVLL).

It belongs to the UppP family.

Its subcellular location is the cell membrane. It carries out the reaction di-trans,octa-cis-undecaprenyl diphosphate + H2O = di-trans,octa-cis-undecaprenyl phosphate + phosphate + H(+). Catalyzes the dephosphorylation of undecaprenyl diphosphate (UPP). Confers resistance to bacitracin. This is Undecaprenyl-diphosphatase 1 from Bacillus thuringiensis subsp. konkukian (strain 97-27).